The chain runs to 151 residues: Small ribosomal subunit protein eS6 (151 aa).

This sequence belongs to the eukaryotic ribosomal protein eS6 family.

The chain is Small ribosomal subunit protein eS6 from Pyrobaculum calidifontis (strain DSM 21063 / JCM 11548 / VA1).